Reading from the N-terminus, the 916-residue chain is Translation initiation factor IF-2 (916 aa).

The segment covering 151-191 has biased composition (basic and acidic residues); sequence NLDEQQRLAESDRARDEAIQRKRDEEQAAKDRVEAERKAAE. Disordered stretches follow at residues 151-262 and 280-328; these read NLDE…SHVM and HLSA…ERPT. 2 stretches are compositionally biased toward low complexity: residues 192-243 and 293-305; these read EAAA…ATPA and RGKP…SSSS. One can recognise a tr-type G domain in the interval 415 to 584; that stretch reads SRPPVVTIMG…SLQAEVLELK (170 aa). The interval 424–431 is G1; it reads GHVDHGKT. Residue 424 to 431 coordinates GTP; the sequence is GHVDHGKT. Residues 449–453 are G2; the sequence is GITQH. The interval 470-473 is G3; the sequence is DTPG. Residues 470 to 474 and 524 to 527 each bind GTP; these read DTPGH and NKID. Positions 524–527 are G4; that stretch reads NKID. A G5 region spans residues 560 to 562; that stretch reads SAK.

It belongs to the TRAFAC class translation factor GTPase superfamily. Classic translation factor GTPase family. IF-2 subfamily.

It is found in the cytoplasm. In terms of biological role, one of the essential components for the initiation of protein synthesis. Protects formylmethionyl-tRNA from spontaneous hydrolysis and promotes its binding to the 30S ribosomal subunits. Also involved in the hydrolysis of GTP during the formation of the 70S ribosomal complex. In Xanthomonas campestris pv. campestris (strain ATCC 33913 / DSM 3586 / NCPPB 528 / LMG 568 / P 25), this protein is Translation initiation factor IF-2.